Consider the following 503-residue polypeptide: MEEFQGYLEVDRSQQHDLLYPLLFREYIYALAHDHGLNRSILFENAGYDNKSSSIIVKRLITRMYQQNRLIFSSKDSIQNQFIGHNKNLYSQIISEGFAVIVEIPFSLRLVFSLERKEMAKSHNLRSIHSIFPFLEDKFTHLDYVSDVLIPYYIHLEILVQTLRYWVKDSSSLHLLRFFLHEYCNSLITPKKHITFFSKGNPRLFLFLYNSHICEYEYIFLFLRNQSSHLRSTSSGIFFERIYFYVKIEHFFKVFFDNNFQCTLWFFKDPFMHYVRYQGKFFLASKDTSLRMNKWKYYLVNLWQYHFYAWFKPGRIDINQLFKYSLDFLGYRSNVRLNSSVVRSQMLZNLFLINNAMKKFETIVPIIPLIGSLYKANFCNTFGHPISKPTRTDSSDSDIIDRFLRICRNLSHYHSGSSKKKSLYRVKYILRLSCVXXXXXXXXXTVRTFVKRLGSEFLEEFLTEEEVVLSLIFPRTYSTSRRLYRGHIWYLDITSINDLVNYE.

This sequence belongs to the intron maturase 2 family. MatK subfamily.

The protein resides in the plastid. It localises to the chloroplast. Its function is as follows. Usually encoded in the trnK tRNA gene intron. Probably assists in splicing its own and other chloroplast group II introns. The chain is Maturase K from Thryptomene saxicola (Rock thryptomene).